A 420-amino-acid chain; its full sequence is Tyrosine--tRNA ligase (420 aa).

Tyrosine 33 is an L-tyrosine binding site. A 'HIGH' region motif is present at residues proline 38–histidine 47. L-tyrosine is bound by residues tyrosine 167 and glutamine 171. The short motif at lysine 227 to serine 231 is the 'KMSKS' region element. Residue lysine 230 participates in ATP binding. The region spanning proline 352–tyrosine 418 is the S4 RNA-binding domain.

It belongs to the class-I aminoacyl-tRNA synthetase family. TyrS type 1 subfamily. Homodimer.

Its subcellular location is the cytoplasm. It carries out the reaction tRNA(Tyr) + L-tyrosine + ATP = L-tyrosyl-tRNA(Tyr) + AMP + diphosphate + H(+). Catalyzes the attachment of tyrosine to tRNA(Tyr) in a two-step reaction: tyrosine is first activated by ATP to form Tyr-AMP and then transferred to the acceptor end of tRNA(Tyr). In Corynebacterium diphtheriae (strain ATCC 700971 / NCTC 13129 / Biotype gravis), this protein is Tyrosine--tRNA ligase.